A 446-amino-acid polypeptide reads, in one-letter code: NAD kinase (446 aa).

Ser46, Ser48, Ser50, Ser55, and Ser64 each carry phosphoserine.

The protein belongs to the NAD kinase family. A divalent metal cation serves as cofactor. As to expression, widely expressed but not detected in skeletal muscle.

It carries out the reaction NAD(+) + ATP = ADP + NADP(+) + H(+). The sequence is that of NAD kinase (NADK) from Homo sapiens (Human).